The following is a 143-amino-acid chain: Histone H2B.2, sperm (143 aa).

Residues 1–49 form a disordered region; the sequence is MPKSPSKSSPRKGSPRKGSPRKGSPKRGGKGAKRAGKGGRRNVVKRRRR. 5 consecutive short sequence motifs (SPKK motif) follow at residues 4 to 7, 9 to 12, 14 to 17, 19 to 22, and 24 to 27; these read SPSK, SPRK, and SPKR. Positions 9–49 are enriched in basic residues; sequence SPRKGSPRKGSPRKGSPKRGGKGAKRAGKGGRRNVVKRRRR. Phosphoserine is present on residues Ser14, Ser19, and Ser24. Ser129 carries O-linked (GlcNAc) serine glycosylation. Lys137 is covalently cross-linked (Glycyl lysine isopeptide (Lys-Gly) (interchain with G-Cter in ubiquitin)).

The protein belongs to the histone H2B family. As to quaternary structure, the nucleosome is a histone octamer containing two molecules each of H2A, H2B, H3 and H4 assembled in one H3-H4 heterotetramer and two H2A-H2B heterodimers. The octamer wraps approximately 147 bp of DNA. Post-translationally, monoubiquitination of Lys-137 gives a specific tag for epigenetic transcriptional activation and is also prerequisite for histone H3 'Lys-4' and 'Lys-79' methylation. In terms of processing, phosphorylated on SPKK motifs 3, 4 and 5; which may regulate DNA binding. Dephosphorylated during maturation of spermatids to mature sperm and rephosphorylated at fertilization. GlcNAcylation at Ser-129 promotes monoubiquitination of Lys-137. It fluctuates in response to extracellular glucose, and associates with transcribed genes.

The protein resides in the nucleus. Its subcellular location is the chromosome. In terms of biological role, core component of nucleosome. Nucleosomes wrap and compact DNA into chromatin, limiting DNA accessibility to the cellular machineries which require DNA as a template. Histones thereby play a central role in transcription regulation, DNA repair, DNA replication and chromosomal stability. DNA accessibility is regulated via a complex set of post-translational modifications of histones, also called histone code, and nucleosome remodeling. The chain is Histone H2B.2, sperm from Psammechinus miliaris (Green sea urchin).